We begin with the raw amino-acid sequence, 241 residues long: Zinc finger CCHC domain-containing protein 24 (241 aa).

Residues S65 and S93 each carry the phosphoserine modification. The CCHC-type zinc-finger motif lies at 132–149 (YLCHLCFNKGHYIKDCPQ).

The protein is Zinc finger CCHC domain-containing protein 24 (ZCCHC24) of Homo sapiens (Human).